Here is a 190-residue protein sequence, read N- to C-terminus: Threonylcarbamoyl-AMP synthase (190 aa).

Residues 7–190 (RAALSDVLQA…ALTGKQFRQG (184 aa)) form the YrdC-like domain.

It belongs to the SUA5 family. TsaC subfamily.

It is found in the cytoplasm. The enzyme catalyses L-threonine + hydrogencarbonate + ATP = L-threonylcarbamoyladenylate + diphosphate + H2O. Required for the formation of a threonylcarbamoyl group on adenosine at position 37 (t(6)A37) in tRNAs that read codons beginning with adenine. Catalyzes the conversion of L-threonine, HCO(3)(-)/CO(2) and ATP to give threonylcarbamoyl-AMP (TC-AMP) as the acyladenylate intermediate, with the release of diphosphate. The polypeptide is Threonylcarbamoyl-AMP synthase (Yersinia enterocolitica serotype O:8 / biotype 1B (strain NCTC 13174 / 8081)).